Here is a 204-residue protein sequence, read N- to C-terminus: Thiamine-phosphate synthase (204 aa).

4-amino-2-methyl-5-(diphosphooxymethyl)pyrimidine-binding positions include 32–36 and D64; that span reads QLRMK. 2 residues coordinate Mg(2+): D65 and D84. Position 103 (T103) interacts with 4-amino-2-methyl-5-(diphosphooxymethyl)pyrimidine. 129-131 is a 2-[(2R,5Z)-2-carboxy-4-methylthiazol-5(2H)-ylidene]ethyl phosphate binding site; the sequence is TTT. K132 is a binding site for 4-amino-2-methyl-5-(diphosphooxymethyl)pyrimidine. G165 lines the 2-[(2R,5Z)-2-carboxy-4-methylthiazol-5(2H)-ylidene]ethyl phosphate pocket.

The protein belongs to the thiamine-phosphate synthase family. Mg(2+) is required as a cofactor.

It carries out the reaction 2-[(2R,5Z)-2-carboxy-4-methylthiazol-5(2H)-ylidene]ethyl phosphate + 4-amino-2-methyl-5-(diphosphooxymethyl)pyrimidine + 2 H(+) = thiamine phosphate + CO2 + diphosphate. The enzyme catalyses 2-(2-carboxy-4-methylthiazol-5-yl)ethyl phosphate + 4-amino-2-methyl-5-(diphosphooxymethyl)pyrimidine + 2 H(+) = thiamine phosphate + CO2 + diphosphate. It catalyses the reaction 4-methyl-5-(2-phosphooxyethyl)-thiazole + 4-amino-2-methyl-5-(diphosphooxymethyl)pyrimidine + H(+) = thiamine phosphate + diphosphate. It participates in cofactor biosynthesis; thiamine diphosphate biosynthesis; thiamine phosphate from 4-amino-2-methyl-5-diphosphomethylpyrimidine and 4-methyl-5-(2-phosphoethyl)-thiazole: step 1/1. In terms of biological role, condenses 4-methyl-5-(beta-hydroxyethyl)thiazole monophosphate (THZ-P) and 2-methyl-4-amino-5-hydroxymethyl pyrimidine pyrophosphate (HMP-PP) to form thiamine monophosphate (TMP). The protein is Thiamine-phosphate synthase of Bacteroides fragilis (strain YCH46).